Here is a 601-residue protein sequence, read N- to C-terminus: NADH-quinone oxidoreductase subunit C/D (601 aa).

Residues 1–192 (MIVPDLVADA…PPYSLTEDQE (192 aa)) form an NADH dehydrogenase I subunit C region. The tract at residues 216–601 (DFMFLNLGPN…IDFVMADVDR (386 aa)) is NADH dehydrogenase I subunit D.

The protein in the N-terminal section; belongs to the complex I 30 kDa subunit family. It in the C-terminal section; belongs to the complex I 49 kDa subunit family. As to quaternary structure, NDH-1 is composed of 13 different subunits. Subunits NuoB, CD, E, F, and G constitute the peripheral sector of the complex.

It is found in the cell inner membrane. The enzyme catalyses a quinone + NADH + 5 H(+)(in) = a quinol + NAD(+) + 4 H(+)(out). Functionally, NDH-1 shuttles electrons from NADH, via FMN and iron-sulfur (Fe-S) centers, to quinones in the respiratory chain. The immediate electron acceptor for the enzyme in this species is believed to be ubiquinone. Couples the redox reaction to proton translocation (for every two electrons transferred, four hydrogen ions are translocated across the cytoplasmic membrane), and thus conserves the redox energy in a proton gradient. In Gluconacetobacter diazotrophicus (strain ATCC 49037 / DSM 5601 / CCUG 37298 / CIP 103539 / LMG 7603 / PAl5), this protein is NADH-quinone oxidoreductase subunit C/D.